The chain runs to 341 residues: Serpentine receptor class beta-3 (341 aa).

Residues 1–23 (MLETNDSVCELAYQLAYHPVYRS) are Extracellular-facing. Asparagine 5 is a glycosylation site (N-linked (GlcNAc...) asparagine). Residues 24–44 (SQFWSMLVSSLSIPALIYFIT) form a helical membrane-spanning segment. Over 45 to 58 (RKIFFLHFHGNLKC) the chain is Cytoplasmic. The chain crosses the membrane as a helical span at residues 59-79 (LLIVYFICNLLFSMALCFAFF). Residues 80–103 (YQFLIPFFVTSKCQLLINTTLFKW) lie on the Extracellular side of the membrane. N-linked (GlcNAc...) asparagine glycosylation occurs at asparagine 97. The helical transmembrane segment at 104 to 124 (GQICSFLLLTSSMLLPIGFSI) threads the bilayer. The Cytoplasmic segment spans residues 125–141 (ERFVALGNAQKYESSRT). The helical transmembrane segment at 142–162 (FLGPVIIFIIIAVDFSIIFSV) threads the bilayer. Over 163–187 (YKNEPFTEGFYSFILVPSTTASQIN) the chain is Extracellular. A helical transmembrane segment spans residues 188–208 (MYFFVLLFVKIFNLLLNCILL). Topologically, residues 209–237 (RIHKKIRIKYYSLSVRYEMEEILQSSKFT) are cytoplasmic. A helical membrane pass occupies residues 238–258 (FIIRFTHLLFFGFYVVVILFV). The Extracellular portion of the chain corresponds to 259-276 (RIMGESFFNGTLNYSVAR). 2 N-linked (GlcNAc...) asparagine glycosylation sites follow: asparagine 267 and asparagine 271. Residues 277–297 (GVFCTVPTYNLIIVIIGIKSL) form a helical membrane-spanning segment. The Cytoplasmic portion of the chain corresponds to 298 to 341 (RHLNLQRLNKVQSTVQIKSTGKEGSKNYEDIITNYWDSVSSRTP).

This sequence belongs to the nematode receptor-like protein srb family. As to expression, expressed throughout the head.

The protein resides in the cell membrane. Its subcellular location is the perikaryon. The protein localises to the cell projection. It localises to the dendrite. G-protein coupled receptor. The protein is Serpentine receptor class beta-3 of Caenorhabditis elegans.